The primary structure comprises 650 residues: Rab proteins geranylgeranyltransferase component A 1 (650 aa).

2 disordered regions span residues 156–208 (IPAE…ETPK) and 603–650 (PAPP…EPSE). Residues 177–190 (ATGKKENSDAKSST) show a composition bias toward basic and acidic residues. The segment covering 616 to 634 (DSSQQEVPESSVTPETNSE) has biased composition (polar residues).

Belongs to the Rab GDI family. As to quaternary structure, monomer. Heterotrimer composed of RABGGTA, RABGGTB and CHM; within this trimer, RABGGTA and RABGGTB form the catalytic component B, while CHM (component A) mediates Rab protein binding. Can associate with the Rab GGTase dimer (RGGT or component B) prior to Rab protein binding; the association is stabilized by geranylgeranyl pyrophosphate (GGpp). The CHM:RGGT:Rab complex is destabilized by GGpp. Interacts with RAB1A, RAB1B, RAB7A and RAB27A and mediates their prenylation. Interacts with RAB5A. Interacts with the non-phosphorylated forms of RAB3A, RAB3B, RAB3C, RAB3D, RAB5B, RAB5C RAB8A, RAB8B, RAB10, RAB12, RAB35, and RAB43. In terms of tissue distribution, most abundant in the heart, brain, and spleen. Lower levels seen in the lung, liver, muscle and kidney. Extremely low levels seen in the testis.

The protein resides in the cytoplasm. The protein localises to the cytosol. Its function is as follows. Substrate-binding subunit of the Rab geranylgeranyltransferase (GGTase) complex. Binds unprenylated Rab proteins and presents the substrate peptide to the catalytic component B composed of RABGGTA and RABGGTB, and remains bound to it after the geranylgeranyl transfer reaction. The component A is thought to be regenerated by transferring its prenylated Rab back to the donor membrane. Besides, a pre-formed complex consisting of CHM and the Rab GGTase dimer (RGGT or component B) can bind to and prenylate Rab proteins; this alternative pathway is proposed to be the predominant pathway for Rab protein geranylgeranylation. The polypeptide is Rab proteins geranylgeranyltransferase component A 1 (Chm) (Rattus norvegicus (Rat)).